We begin with the raw amino-acid sequence, 221 residues long: Ribonuclease HII (221 aa).

In terms of domain architecture, RNase H type-2 spans 29–220; it reads RRVAGVDEVG…LRDLQAGEIG (192 aa). Residues aspartate 35, glutamate 36, and aspartate 129 each contribute to the a divalent metal cation site. The disordered stretch occupies residues 198-221; that stretch reads LGPSPQHRRSFAPLRDLQAGEIGG.

It belongs to the RNase HII family. Mn(2+) is required as a cofactor. It depends on Mg(2+) as a cofactor.

It is found in the cytoplasm. It catalyses the reaction Endonucleolytic cleavage to 5'-phosphomonoester.. In terms of biological role, endonuclease that specifically degrades the RNA of RNA-DNA hybrids. In Synechococcus sp. (strain JA-3-3Ab) (Cyanobacteria bacterium Yellowstone A-Prime), this protein is Ribonuclease HII.